The following is a 570-amino-acid chain: Formate--tetrahydrofolate ligase (570 aa).

65–72 (TPFGEGKT) serves as a coordination point for ATP.

It belongs to the formate--tetrahydrofolate ligase family.

It carries out the reaction (6S)-5,6,7,8-tetrahydrofolate + formate + ATP = (6R)-10-formyltetrahydrofolate + ADP + phosphate. The protein operates within one-carbon metabolism; tetrahydrofolate interconversion. The polypeptide is Formate--tetrahydrofolate ligase (Shewanella woodyi (strain ATCC 51908 / MS32)).